A 126-amino-acid polypeptide reads, in one-letter code: Holo-[acyl-carrier-protein] synthase (126 aa).

Mg(2+) is bound by residues aspartate 8 and glutamate 57.

Belongs to the P-Pant transferase superfamily. AcpS family. Requires Mg(2+) as cofactor.

The protein localises to the cytoplasm. It catalyses the reaction apo-[ACP] + CoA = holo-[ACP] + adenosine 3',5'-bisphosphate + H(+). In terms of biological role, transfers the 4'-phosphopantetheine moiety from coenzyme A to a Ser of acyl-carrier-protein. The chain is Holo-[acyl-carrier-protein] synthase from Vibrio cholerae serotype O1 (strain ATCC 39541 / Classical Ogawa 395 / O395).